Consider the following 989-residue polypeptide: Phosphoenolpyruvate carboxylase (989 aa).

Residues His-175 and Lys-630 contribute to the active site.

Belongs to the PEPCase type 1 family. It depends on Mg(2+) as a cofactor.

The enzyme catalyses oxaloacetate + phosphate = phosphoenolpyruvate + hydrogencarbonate. Functionally, forms oxaloacetate, a four-carbon dicarboxylic acid source for the tricarboxylic acid cycle. This Prochlorococcus marinus (strain MIT 9301) protein is Phosphoenolpyruvate carboxylase.